The following is a 343-amino-acid chain: MIREWENGCPKIGKQRARDSRAQERMTTEGKLNKNGIPARVFNISDSFLNKESLSSQGDVCPASPLGIWTKFYKSDPRIALGKYSPLEKEILRLGGVHTVAARRFLTYKQEEERKMLKELQTLSADYKRVVDCRRQHTSPCATCGSLGKMWTAKVIVSPEEFRMPRRERLNVSKHIERMQLARALRSKQLLPYIERFRGSSLLPSGGLGPMARARAGEGQDDGNTDDGNDVHQKGRGEVESKTSKRQEIKMNVIFKSEEPQKCITSHPNDLKPFFPAKKAERSITGLTNRSLLHVSEFPGDLMLMNQDFLSRGIYPSYASQATRLEEENAWKEYMCKVAPHHY.

Disordered regions lie at residues 1–27 and 205–247; these read MIRE…ERMT and SGGL…SKRQ. A compositionally biased stretch (basic and acidic residues) spans 16 to 27; it reads RARDSRAQERMT. Positions 219 to 228 are enriched in acidic residues; sequence GQDDGNTDDG. Over residues 229-247 the composition is skewed to basic and acidic residues; sequence NDVHQKGRGEVESKTSKRQ.

In terms of biological role, dispensable for normal development and fertility. This is an uncharacterized protein from Bos taurus (Bovine).